A 255-amino-acid chain; its full sequence is Small ribosomal subunit protein eS1 (255 aa).

Residues 1 to 18 (MAVGKNKRLSKGKKGLKK) show a composition bias toward basic residues. Positions 1–28 (MAVGKNKRLSKGKKGLKKRTQDPFSRKD) are disordered. Position 2 is an N-acetylalanine; partial (Ala-2). The segment covering 19-28 (RTQDPFSRKD) has biased composition (basic and acidic residues).

The protein belongs to the eukaryotic ribosomal protein eS1 family. Component of the small ribosomal subunit. Mature ribosomes consist of a small (40S) and a large (60S) subunit. The 40S subunit contains about 33 different proteins and 1 molecule of RNA (18S). The 60S subunit contains about 49 different proteins and 3 molecules of RNA (25S, 5.8S and 5S).

It is found in the cytoplasm. This Ajellomyces capsulatus (strain G186AR / H82 / ATCC MYA-2454 / RMSCC 2432) (Darling's disease fungus) protein is Small ribosomal subunit protein eS1.